The primary structure comprises 345 residues: Dihydroorotate dehydrogenase (quinone) (345 aa).

FMN-binding positions include 65–69 (AGLDK) and threonine 89. Residue lysine 69 coordinates substrate. Position 114–118 (114–118 (NRMGF)) interacts with substrate. FMN is bound by residues asparagine 142 and asparagine 175. Substrate is bound at residue asparagine 175. Residue serine 178 is the Nucleophile of the active site. Position 180 (asparagine 180) interacts with substrate. Lysine 220 and threonine 248 together coordinate FMN. Position 249–250 (249–250 (NT)) interacts with substrate. FMN-binding positions include glycine 271, glycine 300, and 321-322 (YT).

It belongs to the dihydroorotate dehydrogenase family. Type 2 subfamily. In terms of assembly, monomer. FMN is required as a cofactor.

It localises to the cell membrane. The catalysed reaction is (S)-dihydroorotate + a quinone = orotate + a quinol. The protein operates within pyrimidine metabolism; UMP biosynthesis via de novo pathway; orotate from (S)-dihydroorotate (quinone route): step 1/1. Functionally, catalyzes the conversion of dihydroorotate to orotate with quinone as electron acceptor. This is Dihydroorotate dehydrogenase (quinone) from Burkholderia thailandensis (strain ATCC 700388 / DSM 13276 / CCUG 48851 / CIP 106301 / E264).